The sequence spans 136 residues: Large ribosomal subunit protein uL16 (136 aa).

This sequence belongs to the universal ribosomal protein uL16 family. Part of the 50S ribosomal subunit.

Its function is as follows. Binds 23S rRNA and is also seen to make contacts with the A and possibly P site tRNAs. This is Large ribosomal subunit protein uL16 from Vibrio vulnificus (strain YJ016).